Here is a 377-residue protein sequence, read N- to C-terminus: 5-hydroxytryptamine receptor 1D (377 aa).

N-linked (GlcNAc...) asparagine glycosylation is found at asparagine 5, asparagine 17, and asparagine 21. 3 helical membrane passes run 39 to 64, 76 to 97, and 110 to 134; these read ISLA…TTIF, LIGS…ISIA, and LCDI…VIAL. A disulfide bridge connects residues cysteine 111 and cysteine 188. Serotonin contacts are provided by aspartate 118 and cysteine 122. A DRY motif; important for ligand-induced conformation changes motif is present at residues 135–137; that stretch reads DRY. 4 helical membrane passes run 155–176, 195–218, 301–326, and 336–359; these read AAVM…PLFW, ISYT…ILYG, KTLG…VLPI, and ALFD…YTVF. Residue serine 321 coordinates serotonin. The NPxxY motif; important for ligand-induced conformation changes and signaling signature appears at 352–356; it reads NPIIY.

This sequence belongs to the G-protein coupled receptor 1 family. In terms of assembly, homodimer. Heterodimer with HTR1B.

The protein resides in the cell membrane. Its function is as follows. G-protein coupled receptor for 5-hydroxytryptamine (serotonin). Also functions as a receptor for ergot alkaloid derivatives, various anxiolytic and antidepressant drugs and other psychoactive substances. Ligand binding causes a conformation change that triggers signaling via guanine nucleotide-binding proteins (G proteins) and modulates the activity of downstream effectors, such as adenylate cyclase. HTR1D is coupled to G(i)/G(o) G alpha proteins and mediates inhibitory neurotransmission by inhibiting adenylate cyclase activity. Regulates the release of 5-hydroxytryptamine in the brain, and thereby affects neural activity. May also play a role in regulating the release of other neurotransmitters. May play a role in vasoconstriction. The polypeptide is 5-hydroxytryptamine receptor 1D (HTR1D) (Canis lupus familiaris (Dog)).